Here is a 139-residue protein sequence, read N- to C-terminus: MILLDTNVISEPLRPQPNERVVAWLDSLILEDVYLSAITVAELRLGVALLLNGKKKNVLHERLEQSILPLFAGRILPFDEPVAAIYAQIRSYAKTHGKEIAAADGYIAATAKQHSLTVATRDTGSFFAADVAVFNPWHD.

The PINc domain occupies 2 to 123; it reads ILLDTNVISE…HSLTVATRDT (122 aa). Aspartate 5 and aspartate 104 together coordinate Mg(2+).

The protein belongs to the PINc/VapC protein family. Forms a heterodimer with FitA, 4 FitAB heterodimers form a complex that binds to promoter DNA. The complex is also seen in solution. This protein does not actually contact DNA. Mg(2+) serves as cofactor.

Toxic component of a type II toxin-antitoxin (TA) system. Plays a role in the speed with which bacteria traverse human epithelial cells; disruption of the locus increases the speed of trafficking about 2-4-fold. FitAB binds to its own promoter better than FitA alone. The expected nuclease activity was not observed for the FitAB complex, perhaps because FitA (the antitoxin) prevents metal binding and thus catalysis by FitB. In Neisseria gonorrhoeae (strain ATCC 700825 / FA 1090), this protein is Toxin FitB (fitB).